A 258-amino-acid chain; its full sequence is Chaperone protein FaeE (258 aa).

The signal sequence occupies residues 1 to 34 (MSKRNAVTTFFTNRVTKALGMTLALMMTCQSAMA). The tract at residues 239–258 (KKPAAPEAAKAEKADTAEQK) is disordered. Over residues 247–258 (AKAEKADTAEQK) the composition is skewed to basic and acidic residues.

It belongs to the periplasmic pilus chaperone family.

It is found in the periplasm. Its function is as follows. Mediates assembly of pili by forming soluble multimeric complexes with pili subunits as an intermediate step in the assembly process. This protein is involved in K88 pili assembly. Protects pilin protein from proteolytic degradation by DegP and from premature polymerization. The sequence is that of Chaperone protein FaeE (faeE) from Escherichia coli.